A 283-amino-acid chain; its full sequence is Non-selective voltage-gated ion channel VDAC1 (283 aa).

A2 carries the N-acetylalanine modification. K12 contacts ATP. K12 is covalently cross-linked (Glycyl lysine isopeptide (Lys-Gly) (interchain with G-Cter in ubiquitin)). A Phosphoserine modification is found at S13. At T19 the chain carries Phosphothreonine. Residue K20 coordinates ATP. N6-acetyllysine; alternate is present on K20. K20 is subject to N6-succinyllysine; alternate. K20 is covalently cross-linked (Glycyl lysine isopeptide (Lys-Gly) (interchain with G-Cter in ubiquitin); alternate). The next 2 membrane-spanning stretches (beta stranded) occupy residues 26–35 (LIKLDLKTKS) and 39–47 (LEFTSSGSA). Residues K53 and K61 each participate in a glycyl lysine isopeptide (Lys-Gly) (interchain with G-Cter in ubiquitin) cross-link. A beta stranded membrane pass occupies residues 54 to 64 (VTGSLETKYRW). Phosphotyrosine is present on Y67. Beta stranded transmembrane passes span 69 to 76 (LTFTEKWN), 80 to 89 (TLGTEITVED), and 95 to 104 (LKLTFDSSFS). Position 107 is a phosphothreonine (T107). At K109 the chain carries N6-acetyllysine; alternate. K109 participates in a covalent cross-link: Glycyl lysine isopeptide (Lys-Gly) (interchain with G-Cter in ubiquitin); alternate. Residue K110 forms a Glycyl lysine isopeptide (Lys-Gly) (interchain with G-Cter in ubiquitin) linkage. 4 beta stranded membrane-spanning segments follow: residues 111–120 (NAKIKTGYKR), 123–130 (VNLGCDVD), 137–145 (SIRGALVLG), and 150–158 (LAGYQMNFE). A Glycyl lysine isopeptide (Lys-Gly) (interchain with G-Cter in ubiquitin) cross-link involves residue K161. The next 6 beta stranded transmembrane spans lie at 163–175 (RVTQSNFAVGYKT), 178–185 (FQLHTNVN), 189–198 (EFGGSIYQKV), 202–211 (LETAVNLAWT), 218–227 (RFGIAAKYQI), and 231–238 (ACFSAKVN). The residue at position 193 (S193) is a Phosphoserine; by NEK1. S240 is modified (phosphoserine). 242–244 (LIG) is an NAD(+) binding site. A beta stranded membrane pass occupies residues 242-251 (LIGLGYTQTL). N6-acetyllysine is present on K252. A beta stranded transmembrane segment spans residues 254–263 (GIKLTLSALL). Position 260–264 (260–264 (SALLD)) interacts with NAD(+). K266 is modified (N6-acetyllysine; alternate). Residue K266 forms a Glycyl lysine isopeptide (Lys-Gly) (interchain with G-Cter in ubiquitin); alternate linkage. Residues 273–282 (HKLGLGLEFQ) traverse the membrane as a beta stranded segment. Residue K274 forms a Glycyl lysine isopeptide (Lys-Gly) (interchain with G-Cter in ubiquitin) linkage.

This sequence belongs to the eukaryotic mitochondrial porin family. As to quaternary structure, homodimer and homotrimer; in response to cyclic AMP or calcium; oligomerization is required for scramblase activity. Component of the mitochondrial permeability transition pore complex (mPTPC), at least composed of SPG7, VDAC1 and PPIF. Interacts with SPG7, NIPSNAP2 and SLC25A30. Interacts with hexokinases including HK1. The HK1-VDAC1 complex interacts with ATF2. Interacts with BCL2L1. Interacts with BAK1. Interacts with RTL10/BOP (via BH3 domain). Interacts with amyloid-beta and APP; induces VDAC1 dephosphorylation. Interacts with TMEM41B. Interacts with BCAP31. Interacts with HSPA9; this interaction couples ITPR1 to VDAC1. Phosphorylation at Ser-193 by NEK1 promotes the closed conformational state preventing excessive mitochondrial membrane permeability and subsequent apoptotic cell death after injury. Phosphorylation by the AKT-GSK3B axis stabilizes the protein probably by preventing ubiquitin-mediated proteasomal degradation. Post-translationally, ubiquitinated. Undergoes monoubiquitination and polyubiquitination by PRKN; monoubiquitination at Lys-274 inhibits apoptosis, whereas polyubiquitination leads to its degradation and promotes mitophagy. Deubiquitinated by USP30.

It is found in the mitochondrion outer membrane. It localises to the cell membrane. Its subcellular location is the membrane raft. It carries out the reaction chloride(in) = chloride(out). The catalysed reaction is K(+)(in) = K(+)(out). It catalyses the reaction ATP(in) = ATP(out). The enzyme catalyses Ca(2+)(in) = Ca(2+)(out). It carries out the reaction Na(+)(in) = Na(+)(out). The catalysed reaction is Mg(2+)(in) = Mg(2+)(out). It catalyses the reaction L-glutamate(out) = L-glutamate(in). The enzyme catalyses dopamine(out) = dopamine(in). It carries out the reaction acetylcholine(in) = acetylcholine(out). The catalysed reaction is Fe(III)-[cytochrome c](out) = Fe(III)-[cytochrome c](in). It catalyses the reaction a 1,2-diacyl-sn-glycero-3-phosphocholine(in) = a 1,2-diacyl-sn-glycero-3-phosphocholine(out). The enzyme catalyses a 1,2-diacyl-sn-glycero-3-phospho-L-serine(in) = a 1,2-diacyl-sn-glycero-3-phospho-L-serine(out). Its activity is regulated as follows. Inhibited by nitric oxide. Functionally, non-selective voltage-gated ion channel that mediates the transport of anions and cations through the mitochondrion outer membrane and plasma membrane. The channel at the outer mitochondrial membrane allows diffusion of small hydrophilic molecules; in the plasma membrane it is involved in cell volume regulation and apoptosis. It adopts an open conformation at low or zero membrane potential and a closed conformation at potentials above 30-40 mV. The open state has a weak anion selectivity whereas the closed state is cation-selective. Binds various signaling molecules, including the sphingolipid ceramide, the phospholipid phosphatidylcholine, and the sterols cholesterol and oxysterol. In depolarized mitochondria, acts downstream of PRKN and PINK1 to promote mitophagy or prevent apoptosis; polyubiquitination by PRKN promotes mitophagy, while monoubiquitination by PRKN decreases mitochondrial calcium influx which ultimately inhibits apoptosis. May participate in the formation of the permeability transition pore complex (PTPC) responsible for the release of mitochondrial products that triggers apoptosis. May mediate ATP export from cells. Part of a complex composed of HSPA9, ITPR1 and VDAC1 that regulates mitochondrial calcium-dependent apoptosis by facilitating calcium transport from the ER lumen to the mitochondria intermembrane space thus providing calcium for the downstream calcium channel MCU that directly releases it into mitochondria matrix. Mediates cytochrome c efflux. Catalyzes the scrambling of phospholipids across the outer mitochondrial membrane; the mechanism is unrelated to channel activity and is capable of translocating both anionic and zwitterionic phospholipids. In Sus scrofa (Pig), this protein is Non-selective voltage-gated ion channel VDAC1.